The following is an 83-amino-acid chain: MKALMFLALAGLVLLFVVGYASESEEKEFPIELLSKIFAVDVFKGEERGCKGFGDSCTPGKNECCPNHACSNKHKWCKVYLGK.

Residues 1–21 (MKALMFLALAGLVLLFVVGYA) form the signal peptide. The propeptide occupies 22–48 (SESEEKEFPIELLSKIFAVDVFKGEER). Disulfide bonds link Cys-50/Cys-65, Cys-57/Cys-70, and Cys-64/Cys-77. Position 81 is a leucine amide (Leu-81).

The protein belongs to the neurotoxin 10 (Hwtx-1) family. 15 (Hntx-3) subfamily. Monomer. As to expression, expressed by the venom gland.

It is found in the secreted. In terms of biological role, lethal neurotoxin. Selectively blocks tetrodotoxin-sensitive voltage-gated sodium channels (Nav). Does not affect tetrodotoxin-resistant voltage-gated sodium channels or calcium channels. The protein is Mu-theraphotoxin-Hhn2j 3 of Cyriopagopus hainanus (Chinese bird spider).